The sequence spans 1340 residues: Early transcription factor large subunit homolog (1340 aa).

It belongs to the asfivirus G1340L family.

The protein localises to the virion. In terms of biological role, putative initation factor. This is Early transcription factor large subunit homolog from African swine fever virus (isolate Tick/South Africa/Pretoriuskop Pr4/1996) (ASFV).